The sequence spans 178 residues: MLSACGHSKQMEIKAADISDLEKNRMDVAASQAFTAEAVNIGEGISSADMYIEHYQKGKLVERFGPVRADYSEEKTDTIQFVYFENEEGEGKNKHTTIHFGIVDKQGTIAADSSVKRDDSTTQEMTQNISSPEPITFEKPALIGSSIRGTDETMHTSEHKKELIKHQDALLYYVELHH.

This is an uncharacterized protein from Bacillus subtilis (strain 168).